The primary structure comprises 55 residues: Neurotoxin B-IV (55 aa).

Pro-10 carries the post-translational modification Hydroxyproline. Intrachain disulfides connect Cys-12–Cys-52, Cys-16–Cys-48, Cys-23–Cys-41, and Cys-26–Cys-37.

This sequence belongs to the worm B-toxin family.

The protein localises to the secreted. Functionally, this toxin increases the excitability of nerves by delaying the inactivation of the voltage-gated sodium channel (Nav). Only acts on some crustacean. Is more abundant, but 15-fold less toxic than neurotoxin B-II. This chain is Neurotoxin B-IV, found in Cerebratulus lacteus (Milky ribbon worm).